A 581-amino-acid polypeptide reads, in one-letter code: Spastin (581 aa).

Positions 1-12 are enriched in basic residues; it reads MSSPAGRRKKKG. A disordered region spans residues 1–39; the sequence is MSSPAGRRKKKGSGGASPAPARPPPPAAVPAPAAGPAPA. Residues 1 to 48 form a required for nuclear localization region; that stretch reads MSSPAGRRKKKGSGGASPAPARPPPPAAVPAPAAGPAPAPGSPHKRNL. The Cytoplasmic portion of the chain corresponds to 1–54; that stretch reads MSSPAGRRKKKGSGGASPAPARPPPPAAVPAPAAGPAPAPGSPHKRNLYYFSYP. The tract at residues 1 to 78 is required for interaction with ATL1; that stretch reads MSSPAGRRKK…LGLLFVWLCQ (78 aa). The segment at 1–191 is required for midbody localization; it reads MSSPAGRRKK…LVMAKDRLQL (191 aa). The segment at 1–265 is required for interaction with RTN1; sequence MSSPAGRRKK…GTSKPNRTNK (265 aa). Residues 4–11 carry the Nuclear localization signal motif; sequence PAGRRKKK. Positions 20–39 are enriched in pro residues; sequence PARPPPPAAVPAPAAGPAPA. Positions 48–85 are required for interaction with SSNA1 and microtubules; sequence LYYFSYPLVVGFALLRLLACHLGLLFVWLCQRFSRALM. Residues 55-75 constitute an intramembrane region (helical); that stretch reads LVVGFALLRLLACHLGLLFVW. The Nuclear export signal signature appears at 57–65; the sequence is VGFALLRLL. Residues 76-581 lie on the Cytoplasmic side of the membrane; that stretch reads LCQRFSRALM…WNKDFGDTTV (506 aa). A disordered region spans residues 90–111; the sequence is SSGTAPAPASPSTPAPGPGGEA. Positions 97–106 are enriched in pro residues; that stretch reads PASPSTPAPG. The MIT domain maps to 118–192; the sequence is HKQAFEYISI…VMAKDRLQLL (75 aa). The segment at 193-581 is sufficient for microtubule severing; that stretch reads ESGAVPKKKD…WNKDFGDTTV (389 aa). The disordered stretch occupies residues 195–277; sequence GAVPKKKDPL…TPTTAVRKKK (83 aa). Residues 206–225 are compositionally biased toward polar residues; it reads HASNSLPRSKTVMKSGSTGL. A phosphoserine mark is found at Ser-210 and Ser-233. A required for interaction with microtubules and microtubule severing region spans residues 235-293; that stretch reads SGLSMVSGARPGSGPAATTHKGTSKPNRTNKPSTPTTAVRKKKDLKNFRNVDSNLANLI. Residues 254 to 271 are compositionally biased toward polar residues; sequence HKGTSKPNRTNKPSTPTT. Position 271 is a phosphothreonine (Thr-271). Residues 274-277 carry the Nuclear localization signal motif; sequence RKKK. Residue 347-354 participates in ATP binding; the sequence is GPPGNGKT. Position 562 is a phosphoserine (Ser-562).

It belongs to the AAA ATPase family. Spastin subfamily. Homohexamer. Mostly monomeric, but assembles into hexameric structure for short periods of time. Oligomerization seems to be a prerequisite for catalytic activity. Binding to ATP in a cleft between two adjacent subunits stabilizes the homohexameric form. Binds to microtubules at least in part via the alpha-tubulin and beta-tubulin tails. The hexamer adopts a ring conformation through which microtubules pass prior to being severed. Does not interact strongly with tubulin heterodimers. Interacts (via MIT domain) with CHMP1B; the interaction is direct. Interacts with SSNA1. Interacts with ATL1. Interacts with RTN1. Interacts with ZFYVE27. Interacts with REEP1. Interacts (via MIT domain) with IST1.

The protein localises to the membrane. It is found in the endoplasmic reticulum. The protein resides in the midbody. Its subcellular location is the cytoplasm. It localises to the cytoskeleton. The protein localises to the microtubule organizing center. It is found in the centrosome. The protein resides in the perinuclear region. Its subcellular location is the nucleus. It localises to the spindle. The protein localises to the cell projection. It is found in the axon. It catalyses the reaction n ATP + n H2O + a microtubule = n ADP + n phosphate + (n+1) alpha/beta tubulin heterodimers.. Its activity is regulated as follows. Allosteric enzyme with a cooperative mechanism; at least two neighbor subunits influence each other strongly in spastin hexamers. Microtubule binding promotes cooperative interactions among spastin subunits. ATP-dependent microtubule severing protein that specifically recognizes and cuts microtubules that are polyglutamylated. Preferentially recognizes and acts on microtubules decorated with short polyglutamate tails: severing activity increases as the number of glutamates per tubulin rises from one to eight, but decreases beyond this glutamylation threshold. Severing activity is not dependent on tubulin acetylation or detyrosination. Microtubule severing promotes reorganization of cellular microtubule arrays and the release of microtubules from the centrosome following nucleation. It is critical for the biogenesis and maintenance of complex microtubule arrays in axons, spindles and cilia. SPAST is involved in abscission step of cytokinesis and nuclear envelope reassembly during anaphase in cooperation with the ESCRT-III complex. Recruited at the midbody, probably by IST1, and participates in membrane fission during abscission together with the ESCRT-III complex. Recruited to the nuclear membrane by IST1 and mediates microtubule severing, promoting nuclear envelope sealing and mitotic spindle disassembly during late anaphase. Required for membrane traffic from the endoplasmic reticulum (ER) to the Golgi and endosome recycling. Recruited by IST1 to endosomes and regulates early endosomal tubulation and recycling by mediating microtubule severing. Probably plays a role in axon growth and the formation of axonal branches. The protein is Spastin of Rattus norvegicus (Rat).